Reading from the N-terminus, the 240-residue chain is Ubiquinone biosynthesis O-methyltransferase (240 aa).

Residues Arg-44, Gly-64, Asp-85, and Met-129 each coordinate S-adenosyl-L-methionine.

Belongs to the methyltransferase superfamily. UbiG/COQ3 family.

It carries out the reaction a 3-demethylubiquinol + S-adenosyl-L-methionine = a ubiquinol + S-adenosyl-L-homocysteine + H(+). It catalyses the reaction a 3-(all-trans-polyprenyl)benzene-1,2-diol + S-adenosyl-L-methionine = a 2-methoxy-6-(all-trans-polyprenyl)phenol + S-adenosyl-L-homocysteine + H(+). Its pathway is cofactor biosynthesis; ubiquinone biosynthesis. Its function is as follows. O-methyltransferase that catalyzes the 2 O-methylation steps in the ubiquinone biosynthetic pathway. This chain is Ubiquinone biosynthesis O-methyltransferase, found in Escherichia coli (strain UTI89 / UPEC).